The following is a 51-amino-acid chain: Insulin (51 aa).

3 disulfide bridges follow: C7–C37, C19–C50, and C36–C41.

It belongs to the insulin family. As to quaternary structure, heterodimer of a B chain and an A chain linked by two disulfide bonds.

Its subcellular location is the secreted. Its function is as follows. Insulin decreases blood glucose concentration. It increases cell permeability to monosaccharides, amino acids and fatty acids. It accelerates glycolysis, the pentose phosphate cycle, and glycogen synthesis in liver. This is Insulin (INS) from Camelus dromedarius (Dromedary).